Here is a 457-residue protein sequence, read N- to C-terminus: tRNA modification GTPase MnmE (457 aa).

(6S)-5-formyl-5,6,7,8-tetrahydrofolate contacts are provided by R22, E83, and R122. Residues 219 to 378 (GLATAIIGRP…LEEAIKTLFF (160 aa)) form the TrmE-type G domain. A K(+)-binding site is contributed by N229. Residues 229–234 (NVGKSS), 248–254 (TDIAGTT), and 273–276 (DTAG) contribute to the GTP site. Residue S233 coordinates Mg(2+). K(+)-binding residues include T248, I250, and T253. T254 is a Mg(2+) binding site. Residue K457 coordinates (6S)-5-formyl-5,6,7,8-tetrahydrofolate.

The protein belongs to the TRAFAC class TrmE-Era-EngA-EngB-Septin-like GTPase superfamily. TrmE GTPase family. As to quaternary structure, homodimer. Heterotetramer of two MnmE and two MnmG subunits. K(+) serves as cofactor.

The protein localises to the cytoplasm. Functionally, exhibits a very high intrinsic GTPase hydrolysis rate. Involved in the addition of a carboxymethylaminomethyl (cmnm) group at the wobble position (U34) of certain tRNAs, forming tRNA-cmnm(5)s(2)U34. In Listeria welshimeri serovar 6b (strain ATCC 35897 / DSM 20650 / CCUG 15529 / CIP 8149 / NCTC 11857 / SLCC 5334 / V8), this protein is tRNA modification GTPase MnmE.